The primary structure comprises 589 residues: uncharacterized protein (589 aa).

Transmembrane regions (helical) follow at residues Leu-11–Ala-31, Leu-57–Leu-77, Phe-97–Ala-117, Ile-190–Ile-210, and Gly-213–Gly-233. The region spanning Leu-57–Leu-357 is the ABC transmembrane type-1 domain. The 198-residue stretch at Val-390–Cys-587 folds into the ABC transporter domain. Gly-423–Thr-430 serves as a coordination point for ATP.

It belongs to the ABC transporter superfamily.

It is found in the cell inner membrane. This is an uncharacterized protein from Haemophilus influenzae (strain ATCC 51907 / DSM 11121 / KW20 / Rd).